Here is a 632-residue protein sequence, read N- to C-terminus: tRNA uridine 5-carboxymethylaminomethyl modification enzyme MnmG (632 aa).

FAD-binding positions include 13–18, Val125, and Ser180; that span reads GGGHAG. NAD(+) is bound at residue 273–287; it reads GPRYCPSIEDKVMRF. Position 370 (Gln370) interacts with FAD.

This sequence belongs to the MnmG family. In terms of assembly, homodimer. Heterotetramer of two MnmE and two MnmG subunits. It depends on FAD as a cofactor.

It is found in the cytoplasm. NAD-binding protein involved in the addition of a carboxymethylaminomethyl (cmnm) group at the wobble position (U34) of certain tRNAs, forming tRNA-cmnm(5)s(2)U34. In Vibrio vulnificus (strain YJ016), this protein is tRNA uridine 5-carboxymethylaminomethyl modification enzyme MnmG.